The following is a 215-amino-acid chain: Probable transaldolase (215 aa).

Lys-83 functions as the Schiff-base intermediate with substrate in the catalytic mechanism.

The protein belongs to the transaldolase family. Type 3B subfamily.

Its subcellular location is the cytoplasm. It carries out the reaction D-sedoheptulose 7-phosphate + D-glyceraldehyde 3-phosphate = D-erythrose 4-phosphate + beta-D-fructose 6-phosphate. The protein operates within carbohydrate degradation; pentose phosphate pathway; D-glyceraldehyde 3-phosphate and beta-D-fructose 6-phosphate from D-ribose 5-phosphate and D-xylulose 5-phosphate (non-oxidative stage): step 2/3. Its function is as follows. Transaldolase is important for the balance of metabolites in the pentose-phosphate pathway. This chain is Probable transaldolase, found in Clostridium perfringens (strain 13 / Type A).